Here is a 381-residue protein sequence, read N- to C-terminus: tRNA-specific 2-thiouridylase MnmA (381 aa).

ATP is bound by residues G9–S16 and M35. An interaction with target base in tRNA region spans residues N95–D97. Catalysis depends on C100, which acts as the Nucleophile. A disulfide bridge connects residues C100 and C196. Residue G124 participates in ATP binding. The segment at K146 to Q148 is interaction with tRNA. C196 acts as the Cysteine persulfide intermediate in catalysis. Residues R308–Y309 are interaction with tRNA.

It belongs to the MnmA/TRMU family.

The protein resides in the cytoplasm. The catalysed reaction is S-sulfanyl-L-cysteinyl-[protein] + uridine(34) in tRNA + AH2 + ATP = 2-thiouridine(34) in tRNA + L-cysteinyl-[protein] + A + AMP + diphosphate + H(+). Catalyzes the 2-thiolation of uridine at the wobble position (U34) of tRNA, leading to the formation of s(2)U34. This Paraburkholderia xenovorans (strain LB400) protein is tRNA-specific 2-thiouridylase MnmA.